The sequence spans 443 residues: MESLASLYKNHIATLQERTRDALTRFKLDALLIHSGELFNVFLDDHPYPFKVNPQFKAWVPVTQVPNCWLLVDGVNKPKLWFYLPVDYWHNVEPLPTSFWTEDVEVIALPKADGIGSLLPAARGNIGYIGPVPERALQLGIEASNINPKGVIDYLHYYRSFKTEYELACMREAQKMAVNGHRAAEEAFRSGMSEFDINIAYLTATGHRDTDVPYSNIVALNEHAAVLHYTKLDHQAPEEMRSFLLDAGAEYNGYAADLTRTWSAKSDNDYAQLVKDVNDEQLALIATMKAGVSYVDYHIQFHQRIAKLLRKHQIITDMSEEAMVENDLTGPFMPHGIGHPLGLQVHDVAGFMQDDSGTHLAAPAKYPYLRCTRILLPGMVLTIEPGIYFIESLLAPWREGQFSKHFNWQKIEALKPFGGIRIEDNVVIHENNVENMTRDLKLA.

Residues aspartate 246, aspartate 257, histidine 339, glutamate 384, and glutamate 423 each contribute to the Mn(2+) site.

This sequence belongs to the peptidase M24B family. Bacterial-type prolidase subfamily. It depends on Mn(2+) as a cofactor.

It catalyses the reaction Xaa-L-Pro dipeptide + H2O = an L-alpha-amino acid + L-proline. Its function is as follows. Splits dipeptides with a prolyl residue in the C-terminal position. The sequence is that of Xaa-Pro dipeptidase from Shigella dysenteriae serotype 1 (strain Sd197).